We begin with the raw amino-acid sequence, 506 residues long: Tyrosine-protein phosphatase non-receptor type substrate 1 (506 aa).

The first 29 residues, 1–29 (MEPARPAPGRLRPLLCLLLAASNAWTGTA), serve as a signal peptide directing secretion. Residues 30 to 145 (GDGELQVIQP…SGPGTHLTVS (116 aa)) enclose the Ig-like V-type domain. Residues 30–371 (GDGELQVIQP…PGPNDSNWTS (342 aa)) lie on the Extracellular side of the membrane. C55 and C121 form a disulfide bridge. N92 carries N-linked (GlcNAc...) asparagine glycosylation. Residues 136 to 159 (SGPGTHLTVSAKPSPPVLSGPTVR) form a disordered region. Ig-like C1-type domains follow at residues 148 to 248 (PSPP…ANLS) and 255 to 348 (PTLE…HTLE). 12 N-linked (GlcNAc...) asparagine glycosylation sites follow: N167, N179, N204, N210, N246, N270, N292, N311, N319, N344, N365, and N368. C170 and C228 are oxidised to a cystine. An intrachain disulfide couples C273 to C331. The segment at 344-364 (NHTLEVSAPQKDQDTGQTPGP) is disordered. A helical transmembrane segment spans residues 372-392 (IFIVVGVVCALLVALLIAALY). At 393 to 506 (LLRIRQNKAK…EYASVQVQRK (114 aa)) the chain is on the cytoplasmic side. Residues 402–468 (KGSTSSTRLH…QARPPPVSED (67 aa)) are disordered. Over residues 409–418 (RLHEPEKNTR) the composition is skewed to basic and acidic residues. Positions 419 to 429 (ETTQIQDNNDI) are enriched in polar residues. At Y431 the chain carries Phosphotyrosine; by Tyr-kinases. The SH2-binding signature appears at 432-435 (ADLN). Positions 441 to 446 (KSTPKA) match the SH3-binding motif. Residues 444 to 456 (PKANEPNNHTEYA) show a composition bias toward polar residues. Phosphotyrosine; by Tyr-kinases is present on residues Y455, Y472, and Y498. 3 short sequence motifs (SH2-binding) span residues 455-458 (YASI), 472-475 (YADL), and 498-501 (YASV). Residues 480-506 (LNRTPKQPAPKPEPSYSEYASVQVQRK) form a disordered region. A compositionally biased stretch (polar residues) spans 497 to 506 (EYASVQVQRK).

In terms of assembly, binds PTPN11 when tyrosine-phosphorylated, except in macrophages, where it primarily binds PTPN6. Binds GRB2 in vitro. Binds JAK2 irrespective of its phosphorylation status and forms a stable complex. Binds SCAP1 and/or SCAP2. The resulting complex recruits FYB1. Binds FGR and PTK2B. Interacts with TRIM2. Phosphorylated on tyrosine residues. Highly expressed in spleen macrophages. Detected in skin dendritic cells.

The protein localises to the membrane. In terms of biological role, immunoglobulin-like cell surface receptor for CD47. Acts as docking protein and induces translocation of PTPN6, PTPN11 and other binding partners from the cytosol to the plasma membrane. Supports adhesion of cerebellar neurons, neurite outgrowth and glial cell attachment. May play a key role in intracellular signaling during synaptogenesis and in synaptic function. Involved in the negative regulation of receptor tyrosine kinase-coupled cellular responses induced by cell adhesion, growth factors or insulin. Mediates negative regulation of phagocytosis, mast cell activation and dendritic cell activation. CD47 binding prevents maturation of immature dendritic cells and inhibits cytokine production by mature dendritic cells. Plays a role in antiviral immunity and limits new world arenavirus infection by decreasing virus internalization. Receptor for THBS1. Interaction with THBS1 stimulates phosphorylation of SIRPA. In response to THBS1, involved in ROS signaling in non-phagocytic cells, stimulating NADPH oxidase-derived ROS production. In Bos taurus (Bovine), this protein is Tyrosine-protein phosphatase non-receptor type substrate 1 (SIRPA).